Consider the following 349-residue polypeptide: UDP-N-acetylenolpyruvoylglucosamine reductase (349 aa).

The FAD-binding PCMH-type domain maps to 24–197 (FGIDATARFA…VAVTFRLPKR (174 aa)). Arg-173 is a catalytic residue. Ser-249 serves as the catalytic Proton donor. Glu-345 is a catalytic residue.

This sequence belongs to the MurB family. The cofactor is FAD.

The protein resides in the cytoplasm. The enzyme catalyses UDP-N-acetyl-alpha-D-muramate + NADP(+) = UDP-N-acetyl-3-O-(1-carboxyvinyl)-alpha-D-glucosamine + NADPH + H(+). Its pathway is cell wall biogenesis; peptidoglycan biosynthesis. Cell wall formation. The chain is UDP-N-acetylenolpyruvoylglucosamine reductase from Burkholderia ambifaria (strain ATCC BAA-244 / DSM 16087 / CCUG 44356 / LMG 19182 / AMMD) (Burkholderia cepacia (strain AMMD)).